The primary structure comprises 179 residues: MAELATIARPYAEALFRVAEGGDISAWSTLVQELAQVAQLPEVLSVASSPKVSRAQVAELLLATLKSPLASGAQAKNFVQMLVDNHRIALLPEIAVQFEALKNAREGAADVQIVSAFPLEGAQLAELVTSLERKFKRKLKPAVEVDSSLIGGVRVTVGDEVLDTSVRARLAGMQAALTA.

This sequence belongs to the ATPase delta chain family. As to quaternary structure, F-type ATPases have 2 components, F(1) - the catalytic core - and F(0) - the membrane proton channel. F(1) has five subunits: alpha(3), beta(3), gamma(1), delta(1), epsilon(1). F(0) has three main subunits: a(1), b(2) and c(10-14). The alpha and beta chains form an alternating ring which encloses part of the gamma chain. F(1) is attached to F(0) by a central stalk formed by the gamma and epsilon chains, while a peripheral stalk is formed by the delta and b chains.

Its subcellular location is the cell inner membrane. F(1)F(0) ATP synthase produces ATP from ADP in the presence of a proton or sodium gradient. F-type ATPases consist of two structural domains, F(1) containing the extramembraneous catalytic core and F(0) containing the membrane proton channel, linked together by a central stalk and a peripheral stalk. During catalysis, ATP synthesis in the catalytic domain of F(1) is coupled via a rotary mechanism of the central stalk subunits to proton translocation. Functionally, this protein is part of the stalk that links CF(0) to CF(1). It either transmits conformational changes from CF(0) to CF(1) or is implicated in proton conduction. The protein is ATP synthase subunit delta of Burkholderia thailandensis (strain ATCC 700388 / DSM 13276 / CCUG 48851 / CIP 106301 / E264).